The chain runs to 190 residues: Large ribosomal subunit protein uL6 (190 aa).

Belongs to the universal ribosomal protein uL6 family.

In Spodoptera frugiperda (Fall armyworm), this protein is Large ribosomal subunit protein uL6 (RpL9).